Consider the following 426-residue polypeptide: ATP-dependent Clp protease ATP-binding subunit ClpX (426 aa).

Positions Met1–Pro52 constitute a ClpX-type ZB domain. The Zn(2+) site is built by Cys8, Cys11, Cys33, and Cys36. Pro129 to Leu136 is an ATP binding site.

It belongs to the ClpX chaperone family. Component of the ClpX-ClpP complex. Forms a hexameric ring that, in the presence of ATP, binds to fourteen ClpP subunits assembled into a disk-like structure with a central cavity, resembling the structure of eukaryotic proteasomes.

Its function is as follows. ATP-dependent specificity component of the Clp protease. It directs the protease to specific substrates. Can perform chaperone functions in the absence of ClpP. In Helicobacter hepaticus (strain ATCC 51449 / 3B1), this protein is ATP-dependent Clp protease ATP-binding subunit ClpX.